A 166-amino-acid chain; its full sequence is Large ribosomal subunit protein uL10 (166 aa).

Belongs to the universal ribosomal protein uL10 family. As to quaternary structure, part of the ribosomal stalk of the 50S ribosomal subunit. The N-terminus interacts with L11 and the large rRNA to form the base of the stalk. The C-terminus forms an elongated spine to which L12 dimers bind in a sequential fashion forming a multimeric L10(L12)X complex.

In terms of biological role, forms part of the ribosomal stalk, playing a central role in the interaction of the ribosome with GTP-bound translation factors. This chain is Large ribosomal subunit protein uL10, found in Bacillus licheniformis (strain ATCC 14580 / DSM 13 / JCM 2505 / CCUG 7422 / NBRC 12200 / NCIMB 9375 / NCTC 10341 / NRRL NRS-1264 / Gibson 46).